We begin with the raw amino-acid sequence, 315 residues long: Methionyl-tRNA formyltransferase (315 aa).

A (6S)-5,6,7,8-tetrahydrofolate-binding site is contributed by 113–116; that stretch reads SLLP.

It belongs to the Fmt family.

It catalyses the reaction L-methionyl-tRNA(fMet) + (6R)-10-formyltetrahydrofolate = N-formyl-L-methionyl-tRNA(fMet) + (6S)-5,6,7,8-tetrahydrofolate + H(+). Functionally, attaches a formyl group to the free amino group of methionyl-tRNA(fMet). The formyl group appears to play a dual role in the initiator identity of N-formylmethionyl-tRNA by promoting its recognition by IF2 and preventing the misappropriation of this tRNA by the elongation apparatus. In Photorhabdus laumondii subsp. laumondii (strain DSM 15139 / CIP 105565 / TT01) (Photorhabdus luminescens subsp. laumondii), this protein is Methionyl-tRNA formyltransferase.